Reading from the N-terminus, the 1118-residue chain is Sodium-driven chloride bicarbonate exchanger (1118 aa).

Disordered stretches follow at residues 1 to 23, 58 to 96, 245 to 312, and 457 to 476; these read MEIKDQGAQMEPLLPTRNDEEAV, GRKSHRRHRHRGHKHRKRDRERDSGLEDGRESPSFDTPS, KQSE…PPHQ, and NGTAAHGEAEPHGGHSGPEL. The Cytoplasmic portion of the chain corresponds to 1–509; sequence MEIKDQGAQM…DFRDAFSLQC (509 aa). Over residues 59–76 the composition is skewed to basic residues; the sequence is RKSHRRHRHRGHKHRKRD. Basic and acidic residues predominate over residues 77-90; the sequence is RERDSGLEDGRESP. A Phosphoserine modification is found at Ser89. Thr94 carries the post-translational modification Phosphothreonine. The segment covering 248 to 264 has biased composition (polar residues); it reads EPNSMDKNAGQVVSPQS. Ser276 is subject to Phosphoserine. Residues 510 to 530 traverse the membrane as a helical segment; it reads LASFLFLYCACMSPVITFGGL. Over 531–538 the chain is Extracellular; sequence LGEATEGR. A helical membrane pass occupies residues 539–559; the sequence is ISAIESLFGASMTGIAYSLFG. The Cytoplasmic portion of the chain corresponds to 560–562; sequence GQP. A helical membrane pass occupies residues 563–583; the sequence is LTILGSTGPVLVFEKILFKFC. The Extracellular segment spans residues 584-596; the sequence is KEYGLSYLSLRAS. Residues 597–617 traverse the membrane as a helical segment; sequence IGLWTATLCIILVATDASSLV. Residues 618–626 lie on the Cytoplasmic side of the membrane; the sequence is CYITRFTEE. A helical transmembrane segment spans residues 627–647; sequence AFASLICIIFIYEALEKLFEL. The Extracellular segment spans residues 648–720; it reads SEAYPINMHN…VGRACGHDHP (73 aa). Residues Asn674, Asn677, Asn687, and Asn697 are each glycosylated (N-linked (GlcNAc...) asparagine). The chain crosses the membrane as a helical span at residues 721 to 741; it reads YVPDVLFWSVILFFSTVTLSA. The Cytoplasmic segment spans residues 742-762; sequence TLKQFKTSRYFPTKVRSIVSD. Residues 763-783 form a helical membrane-spanning segment; it reads FAVFLTILCMVLIDYAIGIPS. The Extracellular portion of the chain corresponds to 784–809; it reads PKLQVPSVFKPTRDDRGWFVTPLGPN. Residues 810–830 traverse the membrane as a helical segment; the sequence is PWWTVIAAIIPALLCTILIFM. Topologically, residues 831-855 are cytoplasmic; sequence DQQITAVIINRKEHKLKKGCGYHLD. Residues 856–876 traverse the membrane as a helical segment; it reads LLMVAVMLGVCSIMGLPWFVA. Residues 877–912 are Extracellular-facing; it reads ATVLSITHVNSLKLESECSAPGEQPKFLGIREQRVT. A helical transmembrane segment spans residues 913-933; it reads GLMIFILMGSSVFMTSILKFI. Topologically, residues 934 to 935 are cytoplasmic; it reads PM. The chain crosses the membrane as a helical span at residues 936–956; sequence PVLYGVFLYMGASSLKGIQFF. Topologically, residues 957-998 are extracellular; it reads DRIKLFWMPAKHQPDFIYLRHVPLRKVHLFTIIQMSCLGLLW. Residues 999–1019 traverse the membrane as a helical segment; that stretch reads IIKVSRAAIVFPMMVLALVFV. Residues 1020–1118 lie on the Cytoplasmic side of the membrane; sequence RKLMDLLFTK…SSFPSKSSPS (99 aa). 2 positions are modified to phosphoserine: Ser1057 and Ser1085.

Belongs to the anion exchanger (TC 2.A.31) family. Predominantly expressed in the brain.

The protein resides in the basolateral cell membrane. It is found in the apical cell membrane. Its subcellular location is the cell projection. It localises to the dendrite. The protein localises to the axon. The protein resides in the perikaryon. It is found in the presynapse. Its subcellular location is the postsynapse. It carries out the reaction 2 hydrogencarbonate(out) + chloride(in) + Na(+)(out) = 2 hydrogencarbonate(in) + chloride(out) + Na(+)(in). Its function is as follows. Sodium/bicarbonate cotransporter which plays an important role in regulating intracellular pH. Has been shown to act as a sodium/bicarbonate cotransporter in exchange for intracellular chloride. Has also been shown to act as a sodium/biocarbonate cotransporter which does not couple net influx of bicarbonate to net efflux of chloride, with the observed chloride efflux being due to chloride self-exchange. Controls neuronal pH and may contribute to the secretion of cerebrospinal fluid. Acting on presynaptic intracellular pH, it promotes GABA release, reduces the excitability of CA1 pyramidal neurons, and modulates short-term synaptic plasticity. Required in retinal cells to maintain normal pH which is necessary for normal vision. In the kidney, likely to mediate bicarbonate reclamation in the apical membrane of the proximal tubules. This is Sodium-driven chloride bicarbonate exchanger from Homo sapiens (Human).